The primary structure comprises 180 residues: Endogenous alpha-amylase/subtilisin inhibitor (180 aa).

2 disulfide bridges follow: Cys-42/Cys-89 and Cys-143/Cys-147.

This sequence belongs to the protease inhibitor I3 (leguminous Kunitz-type inhibitor) family.

In terms of biological role, inhibitor of endogenous alpha-amylase (wheat also produces an exogenous inhibitor which inactivates alpha-amylase from animal and insect origin). This inhibitor can also inhibit subtilisin. The chain is Endogenous alpha-amylase/subtilisin inhibitor from Triticum aestivum (Wheat).